The primary structure comprises 277 residues: Large ribosomal subunit protein uL2 (277 aa).

The tract at residues 219–277 is disordered; it reads RPQTRGSAMNPVDHPHGGGEGKKNSGRHPVTPWGKPTKGAKTRRKKASDKLIISRRKGK. Positions 231 to 241 are enriched in basic and acidic residues; it reads DHPHGGGEGKK. The segment covering 256 to 277 has biased composition (basic residues); sequence KGAKTRRKKASDKLIISRRKGK.

This sequence belongs to the universal ribosomal protein uL2 family. Part of the 50S ribosomal subunit. Forms a bridge to the 30S subunit in the 70S ribosome.

Functionally, one of the primary rRNA binding proteins. Required for association of the 30S and 50S subunits to form the 70S ribosome, for tRNA binding and peptide bond formation. It has been suggested to have peptidyltransferase activity; this is somewhat controversial. Makes several contacts with the 16S rRNA in the 70S ribosome. The protein is Large ribosomal subunit protein uL2 of Campylobacter concisus (strain 13826).